The chain runs to 69 residues: Dermaseptin-H3 (69 aa).

The signal sequence occupies residues 1–22; it reads MAFLKKSLFLVLFLGMVSLSIC. A propeptide spanning residues 23-43 is cleaved from the precursor; sequence EEEKRENEDEEKQEDDEQSEM. A disordered region spans residues 24 to 44; the sequence is EEKRENEDEEKQEDDEQSEMK. A compositionally biased stretch (acidic residues) spans 30 to 40; that stretch reads EDEEKQEDDEQ. Leu66 is subject to Leucine amide. Positions 68 to 69 are excised as a propeptide; that stretch reads EQ.

It belongs to the frog skin active peptide (FSAP) family. Dermaseptin subfamily. As to expression, expressed by the skin glands.

It is found in the secreted. Functionally, possesses a potent antimicrobial activity against Gram-positive and Gram-negative bacteria. Probably acts by disturbing membrane functions with its amphipathic structure. The protein is Dermaseptin-H3 of Pithecopus azureus (Orange-legged monkey tree frog).